The following is a 143-amino-acid chain: Large ribosomal subunit protein uL11 (143 aa).

It belongs to the universal ribosomal protein uL11 family. As to quaternary structure, part of the ribosomal stalk of the 50S ribosomal subunit. Interacts with L10 and the large rRNA to form the base of the stalk. L10 forms an elongated spine to which L12 dimers bind in a sequential fashion forming a multimeric L10(L12)X complex. One or more lysine residues are methylated.

Forms part of the ribosomal stalk which helps the ribosome interact with GTP-bound translation factors. In Allorhizobium ampelinum (strain ATCC BAA-846 / DSM 112012 / S4) (Agrobacterium vitis (strain S4)), this protein is Large ribosomal subunit protein uL11.